The chain runs to 368 residues: Phospho-N-acetylmuramoyl-pentapeptide-transferase (368 aa).

The next 9 helical transmembrane spans lie at 50–70 (LLAL…VVPL), 95–115 (PTMG…ILAG), 117–137 (SPLV…GWLD), 156–176 (LCLQ…QQGW), 183–203 (ITLP…LAVF), 218–238 (LDGL…LWLA), 242–262 (PAIA…LLHN), 284–304 (AIAI…LFVL), and 347–367 (TQVV…CWLL).

This sequence belongs to the glycosyltransferase 4 family. MraY subfamily. The cofactor is Mg(2+).

It localises to the cell inner membrane. The catalysed reaction is UDP-N-acetyl-alpha-D-muramoyl-L-alanyl-gamma-D-glutamyl-meso-2,6-diaminopimeloyl-D-alanyl-D-alanine + di-trans,octa-cis-undecaprenyl phosphate = di-trans,octa-cis-undecaprenyl diphospho-N-acetyl-alpha-D-muramoyl-L-alanyl-D-glutamyl-meso-2,6-diaminopimeloyl-D-alanyl-D-alanine + UMP. The protein operates within cell wall biogenesis; peptidoglycan biosynthesis. Catalyzes the initial step of the lipid cycle reactions in the biosynthesis of the cell wall peptidoglycan: transfers peptidoglycan precursor phospho-MurNAc-pentapeptide from UDP-MurNAc-pentapeptide onto the lipid carrier undecaprenyl phosphate, yielding undecaprenyl-pyrophosphoryl-MurNAc-pentapeptide, known as lipid I. The chain is Phospho-N-acetylmuramoyl-pentapeptide-transferase from Synechococcus sp. (strain ATCC 27144 / PCC 6301 / SAUG 1402/1) (Anacystis nidulans).